Reading from the N-terminus, the 76-residue chain is Small ribosomal subunit protein bS18 (76 aa).

Belongs to the bacterial ribosomal protein bS18 family. Part of the 30S ribosomal subunit. Forms a tight heterodimer with protein bS6.

Binds as a heterodimer with protein bS6 to the central domain of the 16S rRNA, where it helps stabilize the platform of the 30S subunit. In Nitrosomonas eutropha (strain DSM 101675 / C91 / Nm57), this protein is Small ribosomal subunit protein bS18.